Consider the following 165-residue polypeptide: Transcription factor E (165 aa).

Residues 5-87 (NDPVVRGYLL…LWQLDLSDIE (83 aa)) form the HTH TFE/IIEalpha-type domain.

Belongs to the TFE family. As to quaternary structure, monomer. Interaction with RNA polymerase subunits RpoF and RpoE is necessary for Tfe stimulatory transcription activity. Able to interact with Tbp and RNA polymerase in the absence of DNA promoter. Interacts both with the preinitiation and elongation complexes.

Its function is as follows. Transcription factor that plays a role in the activation of archaeal genes transcribed by RNA polymerase. Facilitates transcription initiation by enhancing TATA-box recognition by TATA-box-binding protein (Tbp), and transcription factor B (Tfb) and RNA polymerase recruitment. Not absolutely required for transcription in vitro, but particularly important in cases where Tbp or Tfb function is not optimal. It dynamically alters the nucleic acid-binding properties of RNA polymerases by stabilizing the initiation complex and destabilizing elongation complexes. Seems to translocate with the RNA polymerase following initiation and acts by binding to the non template strand of the transcription bubble in elongation complexes. This chain is Transcription factor E, found in Methanococcoides burtonii (strain DSM 6242 / NBRC 107633 / OCM 468 / ACE-M).